Reading from the N-terminus, the 183-residue chain is Putative 3-methyladenine DNA glycosylase (183 aa).

This sequence belongs to the DNA glycosylase MPG family.

In Legionella pneumophila (strain Corby), this protein is Putative 3-methyladenine DNA glycosylase.